Here is a 367-residue protein sequence, read N- to C-terminus: Histidinol-phosphate aminotransferase (367 aa).

At Lys226 the chain carries N6-(pyridoxal phosphate)lysine.

Belongs to the class-II pyridoxal-phosphate-dependent aminotransferase family. Histidinol-phosphate aminotransferase subfamily. In terms of assembly, homodimer. It depends on pyridoxal 5'-phosphate as a cofactor.

The catalysed reaction is L-histidinol phosphate + 2-oxoglutarate = 3-(imidazol-4-yl)-2-oxopropyl phosphate + L-glutamate. The protein operates within amino-acid biosynthesis; L-histidine biosynthesis; L-histidine from 5-phospho-alpha-D-ribose 1-diphosphate: step 7/9. The polypeptide is Histidinol-phosphate aminotransferase (Aliarcobacter butzleri (strain RM4018) (Arcobacter butzleri)).